The chain runs to 188 residues: Elongation factor P (188 aa).

At Lys34 the chain carries N6-(3,6-diaminohexanoyl)-5-hydroxylysine.

This sequence belongs to the elongation factor P family. Post-translationally, may be beta-lysylated on the epsilon-amino group of Lys-34 by the combined action of EpmA and EpmB, and then hydroxylated on the C5 position of the same residue by EpmC (if this protein is present). Lysylation is critical for the stimulatory effect of EF-P on peptide-bond formation. The lysylation moiety may extend toward the peptidyltransferase center and stabilize the terminal 3-CCA end of the tRNA. Hydroxylation of the C5 position on Lys-34 may allow additional potential stabilizing hydrogen-bond interactions with the P-tRNA.

It is found in the cytoplasm. Its pathway is protein biosynthesis; polypeptide chain elongation. Its function is as follows. Involved in peptide bond synthesis. Alleviates ribosome stalling that occurs when 3 or more consecutive Pro residues or the sequence PPG is present in a protein, possibly by augmenting the peptidyl transferase activity of the ribosome. Modification of Lys-34 is required for alleviation. The protein is Elongation factor P of Klebsiella pneumoniae (strain 342).